We begin with the raw amino-acid sequence, 410 residues long: Translation initiation factor 2 subunit gamma (410 aa).

A tr-type G domain is found at 6–203; the sequence is QSEVNIGMVG…AIQEFIPTPE (198 aa). The segment at 15-22 is G1; sequence GHVDHGKT. Mg(2+)-binding residues include Asp-18, Thr-22, Gly-43, and Ser-45. A GTP-binding site is contributed by 18-23; that stretch reads DHGKTS. The tract at residues 43–47 is G2; it reads GISIR. Zn(2+) contacts are provided by Cys-58, Cys-61, Cys-73, and Cys-76. The tract at residues 90–93 is G3; that stretch reads DAPG. GTP is bound by residues 146-149 and 181-183; these read NKID and SAH. Residues 146 to 149 form a G4 region; that stretch reads NKID. The G5 stretch occupies residues 181 to 183; that stretch reads SAH.

This sequence belongs to the TRAFAC class translation factor GTPase superfamily. Classic translation factor GTPase family. EIF2G subfamily. Heterotrimer composed of an alpha, a beta and a gamma chain. The cofactor is Mg(2+).

The enzyme catalyses GTP + H2O = GDP + phosphate + H(+). Its function is as follows. eIF-2 functions in the early steps of protein synthesis by forming a ternary complex with GTP and initiator tRNA. The sequence is that of Translation initiation factor 2 subunit gamma from Methanococcus maripaludis (strain C7 / ATCC BAA-1331).